We begin with the raw amino-acid sequence, 238 residues long: Monocyte to macrophage differentiation factor (238 aa).

The Cytoplasmic portion of the chain corresponds to 1-28; it reads MRFRNRFQRFMNHRAPANGRYKPTCYEH. The helical transmembrane segment at 29 to 49 threads the bilayer; the sequence is AANCYTHAFLIVPAIVGSALL. Residues 50 to 61 are Lumenal-facing; it reads HRLSDDCWEKIT. Residues 62-82 form a helical membrane-spanning segment; it reads AWIYGMGLCALFIVSTVFHIV. At 83 to 101 the chain is on the cytoplasmic side; it reads SWKKSHLRTVEHCFHMCDR. A helical transmembrane segment spans residues 102–122; sequence MVIYFFIAASYAPWLNLRELG. Residue proline 123 is a topological domain, lumenal. A helical membrane pass occupies residues 124–144; that stretch reads LASHMRWFIWLMAAGGTIYVF. The Cytoplasmic segment spans residues 145–151; it reads LYHEKYK. A helical membrane pass occupies residues 152–172; sequence VVELFFYLTMGFSPALVVTSM. Residues 173–174 lie on the Lumenal side of the membrane; that stretch reads NN. A helical transmembrane segment spans residues 175-195; the sequence is TDGLQELACGGLIYCLGVVFF. The Cytoplasmic portion of the chain corresponds to 196-198; the sequence is KSD. Residues 199-219 traverse the membrane as a helical segment; it reads GIIPFAHAIWHLFVATAAAVH. The Lumenal segment spans residues 220 to 238; sequence YYAIWKYLYRSPTDFIRHL.

The protein belongs to the ADIPOR family.

Its subcellular location is the late endosome membrane. It localises to the lysosome membrane. Its function is as follows. Involved in the dynamics of lysosomal membranes associated with microglial activation following brain lesion. This Mus musculus (Mouse) protein is Monocyte to macrophage differentiation factor.